The following is a 411-amino-acid chain: Adenylosuccinate synthetase (411 aa).

GTP-binding positions include 11-17 (GDEGKGK) and 39-41 (GHT). Catalysis depends on Asp12, which acts as the Proton acceptor. Mg(2+) contacts are provided by Asp12 and Gly39. Residues 12–15 (DEGK), 37–40 (NAGH), Thr121, Arg135, Gln215, Thr230, and Arg294 each bind IMP. The active-site Proton donor is His40. 290–296 (TTTKRPR) is a binding site for substrate. Residues Arg296, 322 to 324 (KLD), and 400 to 402 (STS) contribute to the GTP site.

The protein belongs to the adenylosuccinate synthetase family. Homodimer. It depends on Mg(2+) as a cofactor.

The protein resides in the cytoplasm. The enzyme catalyses IMP + L-aspartate + GTP = N(6)-(1,2-dicarboxyethyl)-AMP + GDP + phosphate + 2 H(+). Its pathway is purine metabolism; AMP biosynthesis via de novo pathway; AMP from IMP: step 1/2. In terms of biological role, plays an important role in the de novo pathway of purine nucleotide biosynthesis. Catalyzes the first committed step in the biosynthesis of AMP from IMP. The chain is Adenylosuccinate synthetase from Helicobacter pylori (strain HPAG1).